The chain runs to 150 residues: MPKKSVRHIKIREIISNEQIETQDELVKRLNEYDLNVTQATVSRDIKELQLIKVPAPTGQYVYSLPNDRRYHPLEKLGRYLMDSFVNIEGTGNLLVLKTLPGNAQSIGAILDQIDWDEVLGTICGDDTCLLICRDEEASEEIKTRIFNLL.

This sequence belongs to the ArgR family.

The protein localises to the cytoplasm. Its pathway is amino-acid biosynthesis; L-arginine biosynthesis [regulation]. Functionally, regulates arginine biosynthesis genes. The polypeptide is Arginine repressor (Staphylococcus epidermidis (strain ATCC 35984 / DSM 28319 / BCRC 17069 / CCUG 31568 / BM 3577 / RP62A)).